The following is a 345-amino-acid chain: D(2) dopamine receptor B (345 aa).

Topologically, residues 1-10 (EWRFSRIHCD) are extracellular. The cysteines at positions 9 and 84 are disulfide-linked. A helical membrane pass occupies residues 11–32 (IFVTLDVMMCTASILNLCAISI). At 33-53 (DRYTAVAMPMLYNTRYSSKRR) the chain is on the cytoplasmic side. Residues 54-74 (VTVMISVVWVLSFAISCPLLF) traverse the membrane as a helical segment. The Extracellular segment spans residues 75–90 (GLNNTASTVCIIDNPA). Asn-77 carries an N-linked (GlcNAc...) asparagine glycan. The helical transmembrane segment at 91–115 (FVIYSSIVSFYVPFIVTLLVYVQIY) threads the bilayer. Residues 116–275 (IVLRKRRKRV…SQHKEKKATQ (160 aa)) are Cytoplasmic-facing. Positions 166–177 (KKKVEAGNHPED) are enriched in basic and acidic residues. The disordered stretch occupies residues 166–199 (KKKVEAGNHPEDMEMEMMSSTSPPEKTKHKSASP). A helical membrane pass occupies residues 276-297 (MLAIVLGVFIICWLPFFITHIL). Residues 298-311 (NMHCNCNIPQALYS) are Extracellular-facing. Cys-301 and Cys-303 are oxidised to a cystine. A helical membrane pass occupies residues 312-333 (AFTWLGYVNSAVNPIIYTTFNV). The Cytoplasmic segment spans residues 334–345 (EFRKAFIKILHC). A lipid anchor (S-palmitoyl cysteine) is attached at Cys-345.

The protein belongs to the G-protein coupled receptor 1 family. Palmitoylated. Palmitoylation is probably required for proper localization to the plasma membrane and stability of the receptor. As to expression, brain; pituitary.

It is found in the cell membrane. The protein resides in the golgi apparatus membrane. In terms of biological role, this is one of the five types (D1 to D5) of receptors for dopamine. The activity of this receptor is mediated by G proteins which inhibits adenylyl cyclase. In Xenopus D2R is involved in the regulation of the melanotrope cells of the intermediate pituitary during background adaptation of the animal. This is D(2) dopamine receptor B (drd2-b) from Xenopus laevis (African clawed frog).